Reading from the N-terminus, the 654-residue chain is tRNA 5-methylaminomethyl-2-thiouridine biosynthesis bifunctional protein MnmC (654 aa).

A tRNA (mnm(5)s(2)U34)-methyltransferase region spans residues 1-236 (MTDRIVPATL…KRAMLVGEFA (236 aa)). Residues 260–654 (IGAGLAGCAA…IRALRRGRVA (395 aa)) form an FAD-dependent cmnm(5)s(2)U34 oxidoreductase region.

It in the N-terminal section; belongs to the methyltransferase superfamily. tRNA (mnm(5)s(2)U34)-methyltransferase family. In the C-terminal section; belongs to the DAO family. The cofactor is FAD.

Its subcellular location is the cytoplasm. It carries out the reaction 5-aminomethyl-2-thiouridine(34) in tRNA + S-adenosyl-L-methionine = 5-methylaminomethyl-2-thiouridine(34) in tRNA + S-adenosyl-L-homocysteine + H(+). Its function is as follows. Catalyzes the last two steps in the biosynthesis of 5-methylaminomethyl-2-thiouridine (mnm(5)s(2)U) at the wobble position (U34) in tRNA. Catalyzes the FAD-dependent demodification of cmnm(5)s(2)U34 to nm(5)s(2)U34, followed by the transfer of a methyl group from S-adenosyl-L-methionine to nm(5)s(2)U34, to form mnm(5)s(2)U34. The sequence is that of tRNA 5-methylaminomethyl-2-thiouridine biosynthesis bifunctional protein MnmC from Burkholderia thailandensis (strain ATCC 700388 / DSM 13276 / CCUG 48851 / CIP 106301 / E264).